The sequence spans 791 residues: Putative DNA (cytosine-5)-methyltransferase CMT1 (791 aa).

Residues 37–59 (YQSKKTKLQAPTKKPANKGGKKE) form a disordered region. The region spanning 79–199 (VLINLNDDVY…VPYLNFTSAD (121 aa)) is the BAH domain. The SAM-dependent MTase C5-type domain occupies 225–768 (KFLLDLYSGC…YAFGMASQGL (544 aa)). The stretch at 308–333 (VESISELEDEEVEENDDIDEASTGAE) forms a coiled coil. The region spanning 339–404 (FEVEKFLGIM…DGFKSHLLPL (66 aa)) is the Chromo domain. Cysteine 417 is a catalytic residue.

Belongs to the class I-like SAM-binding methyltransferase superfamily. C5-methyltransferase family. Expressed in flowers. Not detected in leaves, roots, seedlings and plants prior formation of flower buds.

The protein localises to the nucleus. It carries out the reaction a 2'-deoxycytidine in DNA + S-adenosyl-L-methionine = a 5-methyl-2'-deoxycytidine in DNA + S-adenosyl-L-homocysteine + H(+). Functionally, may be involved in the CpXpG methylation and in gene silencing. The sequence is that of Putative DNA (cytosine-5)-methyltransferase CMT1 (CMT1) from Arabidopsis thaliana (Mouse-ear cress).